A 208-amino-acid polypeptide reads, in one-letter code: Probable nicotinate-nucleotide adenylyltransferase (208 aa).

It belongs to the NadD family.

It catalyses the reaction nicotinate beta-D-ribonucleotide + ATP + H(+) = deamido-NAD(+) + diphosphate. It functions in the pathway cofactor biosynthesis; NAD(+) biosynthesis; deamido-NAD(+) from nicotinate D-ribonucleotide: step 1/1. Catalyzes the reversible adenylation of nicotinate mononucleotide (NaMN) to nicotinic acid adenine dinucleotide (NaAD). The chain is Probable nicotinate-nucleotide adenylyltransferase from Nostoc sp. (strain PCC 7120 / SAG 25.82 / UTEX 2576).